Reading from the N-terminus, the 91-residue chain is DNA-directed RNA polymerase subunit omega (91 aa).

Belongs to the RNA polymerase subunit omega family. The RNAP catalytic core consists of 2 alpha, 1 beta, 1 beta' and 1 omega subunit. When a sigma factor is associated with the core the holoenzyme is formed, which can initiate transcription.

It catalyses the reaction RNA(n) + a ribonucleoside 5'-triphosphate = RNA(n+1) + diphosphate. In terms of biological role, promotes RNA polymerase assembly. Latches the N- and C-terminal regions of the beta' subunit thereby facilitating its interaction with the beta and alpha subunits. In Edwardsiella ictaluri (strain 93-146), this protein is DNA-directed RNA polymerase subunit omega.